A 115-amino-acid chain; its full sequence is Small ribosomal subunit protein uS14m (115 aa).

It belongs to the universal ribosomal protein uS14 family. As to quaternary structure, component of the mitochondrial small ribosomal subunit (mt-SSU). Mature yeast 74S mitochondrial ribosomes consist of a small (37S) and a large (54S) subunit. The 37S small subunit contains a 15S ribosomal RNA (15S mt-rRNA) and 34 different proteins. The 54S large subunit contains a 21S rRNA (21S mt-rRNA) and 46 different proteins.

The protein resides in the mitochondrion. In terms of biological role, component of the mitochondrial ribosome (mitoribosome), a dedicated translation machinery responsible for the synthesis of mitochondrial genome-encoded proteins, including at least some of the essential transmembrane subunits of the mitochondrial respiratory chain. The mitoribosomes are attached to the mitochondrial inner membrane and translation products are cotranslationally integrated into the membrane. This is Small ribosomal subunit protein uS14m (MRP2) from Saccharomyces cerevisiae (strain ATCC 204508 / S288c) (Baker's yeast).